Reading from the N-terminus, the 369-residue chain is 3-dehydroquinate synthase (369 aa).

NAD(+)-binding positions include 80 to 85 (DGEQYK), 114 to 118 (GVIGD), 138 to 139 (TT), Lys-151, Lys-160, and 178 to 181 (TLKT). Positions 193, 256, and 273 each coordinate Zn(2+).

This sequence belongs to the sugar phosphate cyclases superfamily. Dehydroquinate synthase family. It depends on Co(2+) as a cofactor. Zn(2+) is required as a cofactor. Requires NAD(+) as cofactor.

The protein localises to the cytoplasm. The enzyme catalyses 7-phospho-2-dehydro-3-deoxy-D-arabino-heptonate = 3-dehydroquinate + phosphate. Its pathway is metabolic intermediate biosynthesis; chorismate biosynthesis; chorismate from D-erythrose 4-phosphate and phosphoenolpyruvate: step 2/7. Functionally, catalyzes the conversion of 3-deoxy-D-arabino-heptulosonate 7-phosphate (DAHP) to dehydroquinate (DHQ). The polypeptide is 3-dehydroquinate synthase (Psychrobacter cryohalolentis (strain ATCC BAA-1226 / DSM 17306 / VKM B-2378 / K5)).